A 148-amino-acid chain; its full sequence is uncharacterized protein (148 aa).

The next 4 helical transmembrane spans lie at 29-49 (FSLV…AAKE), 61-81 (PIIL…PLVM), 99-119 (FIVF…NGFL), and 121-141 (ILVS…TLCI).

It localises to the cell membrane. This is an uncharacterized protein from Bacillus subtilis (strain 168).